The primary structure comprises 210 residues: Imidazole glycerol phosphate synthase subunit HisH (210 aa).

A Glutamine amidotransferase type-1 domain is found at 1 to 210; it reads MIAILDYGMG…KLLENFIRFI (210 aa). The active-site Nucleophile is the cysteine 79. Catalysis depends on residues histidine 191 and glutamate 193.

Heterodimer of HisH and HisF.

It is found in the cytoplasm. It catalyses the reaction 5-[(5-phospho-1-deoxy-D-ribulos-1-ylimino)methylamino]-1-(5-phospho-beta-D-ribosyl)imidazole-4-carboxamide + L-glutamine = D-erythro-1-(imidazol-4-yl)glycerol 3-phosphate + 5-amino-1-(5-phospho-beta-D-ribosyl)imidazole-4-carboxamide + L-glutamate + H(+). The enzyme catalyses L-glutamine + H2O = L-glutamate + NH4(+). It functions in the pathway amino-acid biosynthesis; L-histidine biosynthesis; L-histidine from 5-phospho-alpha-D-ribose 1-diphosphate: step 5/9. Its function is as follows. IGPS catalyzes the conversion of PRFAR and glutamine to IGP, AICAR and glutamate. The HisH subunit catalyzes the hydrolysis of glutamine to glutamate and ammonia as part of the synthesis of IGP and AICAR. The resulting ammonia molecule is channeled to the active site of HisF. The chain is Imidazole glycerol phosphate synthase subunit HisH from Leptospira interrogans serogroup Icterohaemorrhagiae serovar copenhageni (strain Fiocruz L1-130).